The following is a 428-amino-acid chain: Enolase (428 aa).

Gln164 provides a ligand contact to (2R)-2-phosphoglycerate. Residue Glu206 is the Proton donor of the active site. Mg(2+) is bound by residues Asp243, Glu286, and Asp313. Residues Lys338, Arg367, Ser368, and Lys389 each contribute to the (2R)-2-phosphoglycerate site. Lys338 functions as the Proton acceptor in the catalytic mechanism.

This sequence belongs to the enolase family. Requires Mg(2+) as cofactor.

The protein resides in the cytoplasm. It is found in the secreted. It localises to the cell surface. The catalysed reaction is (2R)-2-phosphoglycerate = phosphoenolpyruvate + H2O. The protein operates within carbohydrate degradation; glycolysis; pyruvate from D-glyceraldehyde 3-phosphate: step 4/5. In terms of biological role, catalyzes the reversible conversion of 2-phosphoglycerate (2-PG) into phosphoenolpyruvate (PEP). It is essential for the degradation of carbohydrates via glycolysis. This Dehalococcoides mccartyi (strain ATCC BAA-2100 / JCM 16839 / KCTC 5957 / BAV1) protein is Enolase.